A 344-amino-acid chain; its full sequence is Arginine N-succinyltransferase (344 aa).

Leucine 125 contributes to the succinyl-CoA binding site. Catalysis depends on histidine 229, which acts as the Proton donor.

It belongs to the arginine N-succinyltransferase family.

It carries out the reaction succinyl-CoA + L-arginine = N(2)-succinyl-L-arginine + CoA + H(+). It functions in the pathway amino-acid degradation; L-arginine degradation via AST pathway; L-glutamate and succinate from L-arginine: step 1/5. In terms of biological role, catalyzes the transfer of succinyl-CoA to arginine to produce N(2)-succinylarginine. The polypeptide is Arginine N-succinyltransferase (Shigella flexneri serotype 5b (strain 8401)).